A 129-amino-acid chain; its full sequence is Small ribosomal subunit protein uS11 (129 aa).

Belongs to the universal ribosomal protein uS11 family. Part of the 30S ribosomal subunit. Interacts with proteins S7 and S18. Binds to IF-3.

Its function is as follows. Located on the platform of the 30S subunit, it bridges several disparate RNA helices of the 16S rRNA. Forms part of the Shine-Dalgarno cleft in the 70S ribosome. In Thermosipho africanus (strain TCF52B), this protein is Small ribosomal subunit protein uS11.